Reading from the N-terminus, the 224-residue chain is Peptide deformylase 3 (224 aa).

Positions 135 and 177 each coordinate Fe cation. Residue E178 is part of the active site. Residue H181 coordinates Fe cation.

Belongs to the polypeptide deformylase family. It depends on Fe(2+) as a cofactor.

The enzyme catalyses N-terminal N-formyl-L-methionyl-[peptide] + H2O = N-terminal L-methionyl-[peptide] + formate. Functionally, removes the formyl group from the N-terminal Met of newly synthesized proteins. Requires at least a dipeptide for an efficient rate of reaction. N-terminal L-methionine is a prerequisite for activity but the enzyme has broad specificity at other positions. This is Peptide deformylase 3 from Streptomyces avermitilis (strain ATCC 31267 / DSM 46492 / JCM 5070 / NBRC 14893 / NCIMB 12804 / NRRL 8165 / MA-4680).